We begin with the raw amino-acid sequence, 285 residues long: Acetylglutamate kinase (285 aa).

Substrate contacts are provided by residues 64–65 (GG), arginine 86, and asparagine 180.

This sequence belongs to the acetylglutamate kinase family. ArgB subfamily.

It is found in the plastid. Its subcellular location is the chloroplast. The enzyme catalyses N-acetyl-L-glutamate + ATP = N-acetyl-L-glutamyl 5-phosphate + ADP. It participates in amino-acid biosynthesis; L-arginine biosynthesis; N(2)-acetyl-L-ornithine from L-glutamate: step 2/4. Functionally, catalyzes the ATP-dependent phosphorylation of N-acetyl-L-glutamate. This is Acetylglutamate kinase from Gracilaria tenuistipitata var. liui (Red alga).